Here is a 663-residue protein sequence, read N- to C-terminus: Drug sensory protein A (663 aa).

The next 3 helical transmembrane spans lie at 32 to 52 (LMAA…FWAV), 165 to 185 (VFIP…GINP), and 199 to 219 (VTIA…VFNA). Residues 220–272 (LTITQPIKELLLGVKNIAAGNFKQRITLPFGGELGELIVNFNEMAERLERYEA) enclose the HAMP domain. The region spanning 281-351 (EKAKLDTLVS…QPLRELAADQ (71 aa)) is the PAS domain. The 228-residue stretch at 429–656 (NVSHELRTPL…TFWFDLAVYQ (228 aa)) folds into the Histidine kinase domain. At histidine 432 the chain carries Phosphohistidine; by autocatalysis.

The protein localises to the cell membrane. The enzyme catalyses ATP + protein L-histidine = ADP + protein N-phospho-L-histidine.. The sequence is that of Drug sensory protein A (dspA) from Synechocystis sp. (strain ATCC 27184 / PCC 6803 / Kazusa).